Reading from the N-terminus, the 204-residue chain is Small ribosomal subunit protein uS4 (204 aa).

Positions 22-43 are disordered; the sequence is SGKELARRPYAPGDHGNTGRRP. One can recognise an S4 RNA-binding domain in the interval 94–154; sequence TRLDSVVFRL…ERSKKIVPIL (61 aa).

It belongs to the universal ribosomal protein uS4 family. Part of the 30S ribosomal subunit. Contacts protein S5. The interaction surface between S4 and S5 is involved in control of translational fidelity.

Its function is as follows. One of the primary rRNA binding proteins, it binds directly to 16S rRNA where it nucleates assembly of the body of the 30S subunit. With S5 and S12 plays an important role in translational accuracy. This Oenococcus oeni (strain ATCC BAA-331 / PSU-1) protein is Small ribosomal subunit protein uS4.